Here is a 368-residue protein sequence, read N- to C-terminus: Chaperone protein DnaJ (368 aa).

The region spanning 5 to 70 (DYYQVLGVPR…KKRKLYDTHG (66 aa)) is the J domain. The segment at 124–201 (GVERQIQIPT…CNGAGRVEDH (78 aa)) adopts a CR-type zinc-finger fold. Residues Cys137, Cys140, Cys153, Cys156, Cys175, Cys178, Cys189, and Cys192 each coordinate Zn(2+). 4 CXXCXGXG motif repeats span residues 137-144 (CTHCHGSG), 153-160 (CGTCRGSG), 175-182 (CPHCGGRG), and 189-196 (CKVCNGAG).

Belongs to the DnaJ family. As to quaternary structure, homodimer. Zn(2+) is required as a cofactor.

It is found in the cytoplasm. Participates actively in the response to hyperosmotic and heat shock by preventing the aggregation of stress-denatured proteins and by disaggregating proteins, also in an autonomous, DnaK-independent fashion. Unfolded proteins bind initially to DnaJ; upon interaction with the DnaJ-bound protein, DnaK hydrolyzes its bound ATP, resulting in the formation of a stable complex. GrpE releases ADP from DnaK; ATP binding to DnaK triggers the release of the substrate protein, thus completing the reaction cycle. Several rounds of ATP-dependent interactions between DnaJ, DnaK and GrpE are required for fully efficient folding. Also involved, together with DnaK and GrpE, in the DNA replication of plasmids through activation of initiation proteins. The polypeptide is Chaperone protein DnaJ (Xylella fastidiosa (strain 9a5c)).